The chain runs to 115 residues: MSNIIKQIEDEQMKQDVPAFRPGDSVEVKVWVVEGSKKRLQAFEGVVIAIRNRGLHSAFTVRKISNGEGVERVFQTHSPVIDSIAVKRRGAVRKAKLYYLRERTGKSARIKERLS.

It belongs to the bacterial ribosomal protein bL19 family.

This protein is located at the 30S-50S ribosomal subunit interface and may play a role in the structure and function of the aminoacyl-tRNA binding site. This is Large ribosomal subunit protein bL19 from Pectobacterium atrosepticum (strain SCRI 1043 / ATCC BAA-672) (Erwinia carotovora subsp. atroseptica).